We begin with the raw amino-acid sequence, 421 residues long: Imidazolonepropionase (421 aa).

Fe(3+)-binding residues include H81 and H83. Zn(2+) contacts are provided by H81 and H83. 4-imidazolone-5-propanoate is bound by residues R90, Y153, and H186. Position 153 (Y153) interacts with N-formimidoyl-L-glutamate. Position 251 (H251) interacts with Fe(3+). H251 contributes to the Zn(2+) binding site. E254 contacts 4-imidazolone-5-propanoate. Residue D326 participates in Fe(3+) binding. D326 serves as a coordination point for Zn(2+). N-formimidoyl-L-glutamate-binding residues include N328 and G330. S331 serves as a coordination point for 4-imidazolone-5-propanoate.

The protein belongs to the metallo-dependent hydrolases superfamily. HutI family. The cofactor is Zn(2+). Fe(3+) is required as a cofactor.

The protein localises to the cytoplasm. The catalysed reaction is 4-imidazolone-5-propanoate + H2O = N-formimidoyl-L-glutamate. It functions in the pathway amino-acid degradation; L-histidine degradation into L-glutamate; N-formimidoyl-L-glutamate from L-histidine: step 3/3. Its function is as follows. Catalyzes the hydrolytic cleavage of the carbon-nitrogen bond in imidazolone-5-propanoate to yield N-formimidoyl-L-glutamate. It is the third step in the universal histidine degradation pathway. In Streptococcus pyogenes serotype M4 (strain MGAS10750), this protein is Imidazolonepropionase.